A 346-amino-acid chain; its full sequence is Dehydrogenase azaJ (346 aa).

NADP(+) is bound at residue 43–48 (VDYATQ). 133–140 (LAFSTAIV) provides a ligand contact to substrate. NADP(+)-binding positions include 170–173 (ATSV), 193–196 (SPHN), tyrosine 211, and 251–252 (LN). 269–273 (APPNV) provides a ligand contact to substrate. 336-337 (VS) contacts NADP(+).

Belongs to the zinc-containing alcohol dehydrogenase family.

Its pathway is secondary metabolite biosynthesis. Dehydrogenase; part of the gene cluster that mediates the biosynthesis of azaphilones, a class of fungal metabolites characterized by a highly oxygenated pyrano-quinone bicyclic core and exhibiting a broad range of bioactivities. In the first step, the non-reducing polyketide synthase azaA forms the hexaketide precursor from successive condensations of five malonyl-CoA units, presumably with a simple acetyl-CoA starter unit. The reactive polyketide chain then undergoes a PT-mediated C2-C7 cyclization to afford the aromatic ring and is eventually released as an aldehyde through the R-domain. The putative ketoreductase azaE is proposed to catalyze the reduction of the terminal ketone resulting in the early culture product FK17-P2a. The monooxygenase azaH was demonstrated to be the only enzyme required to convert FK17-P2a to azanigerone E. AzaH first hydroxylates the benzaldehyde intermediate FK17-P2a at C4, which triggers the formation of the pyran-ring to afford azanigerone E. In parallel, the 2,4-dimethylhexanoyl chain is synthesized by the HR-PKS azaB and is proposed to be transferred to the C4-hydroxyl of azanigerone E by the acyltransferase azaD directly from the ACP domain of azaB. Alternatively, the 2,4-dimethyl-hexanoyl chain may be offloaded from the HR-PKS as a carboxylic acid and converted to an acyl-CoA by azaF. The resulting acyl-CoA molecule could then be taken up as a substrate by AzaD to form azanigerone B. To yield the carboxylic acid substituent in azanigerone A, the hydroxypropyl side chain of azanigerone B would need to undergo a C-C oxidative cleavage catalyzed by cytochrome P450 AzaI. AzaI is proposed to act on a vicinal diol that leads to a C-C bond scission either through an alkoxyradical intermediate or a peroxy complex. In the biosynthesis of azanigerone A, azanigerone B first undergoes hydroxylation at C10, possibly catalyzed by one of the two FAD-dependent monooxygenases encoded in the cluster, azaG or azaL, resulting in the vicinal diol azanigerone C. Oxidative cleavage of azanigerone C by azaI would yield the corresponding aldehyde derivative of azanigerone A. Finally, the dehydrogenase azaJ is proposed to convert the aldehyde functional group into the carboxylic acid, completing the conversion from azanigerone B to azanigerone A. Alternatively, the oxidation of aldehyde to carboxylic acid may be catalyzed by the same P450 enzyme azaI via consecutive oxidation or by endogenous alcohol dehydrogenase. The polypeptide is Dehydrogenase azaJ (Aspergillus niger (strain ATCC 1015 / CBS 113.46 / FGSC A1144 / LSHB Ac4 / NCTC 3858a / NRRL 328 / USDA 3528.7)).